The primary structure comprises 174 residues: Ribosome maturation factor RimM (174 aa).

In terms of domain architecture, PRC barrel spans 98–171; it reads EGEFYFHQII…TIHIEVMEGL (74 aa).

Belongs to the RimM family. Binds ribosomal protein uS19.

The protein resides in the cytoplasm. Its function is as follows. An accessory protein needed during the final step in the assembly of 30S ribosomal subunit, possibly for assembly of the head region. Essential for efficient processing of 16S rRNA. May be needed both before and after RbfA during the maturation of 16S rRNA. It has affinity for free ribosomal 30S subunits but not for 70S ribosomes. The chain is Ribosome maturation factor RimM from Bacillus pumilus (strain SAFR-032).